A 33-amino-acid polypeptide reads, in one-letter code: Photosystem II reaction center protein T (33 aa).

Residues 3-23 (ALVYTFLLVSTLGIIFFAIFF) traverse the membrane as a helical segment.

The protein belongs to the PsbT family. PSII is composed of 1 copy each of membrane proteins PsbA, PsbB, PsbC, PsbD, PsbE, PsbF, PsbH, PsbI, PsbJ, PsbK, PsbL, PsbM, PsbT, PsbY, PsbZ, Psb30/Ycf12, at least 3 peripheral proteins of the oxygen-evolving complex and a large number of cofactors. It forms dimeric complexes.

It is found in the plastid. Its subcellular location is the chloroplast thylakoid membrane. Found at the monomer-monomer interface of the photosystem II (PS II) dimer, plays a role in assembly and dimerization of PSII. PSII is a light-driven water plastoquinone oxidoreductase, using light energy to abstract electrons from H(2)O, generating a proton gradient subsequently used for ATP formation. The protein is Photosystem II reaction center protein T of Asparagus officinalis (Garden asparagus).